The sequence spans 483 residues: V-type proton ATPase subunit B 2 (483 aa).

It belongs to the ATPase alpha/beta chains family. As to quaternary structure, V-ATPase is a heteromultimeric enzyme composed of a peripheral catalytic V1 complex (main components: subunits A, B, C, D, E, and F) attached to an integral membrane V0 proton pore complex (main component: the proteolipid protein).

Non-catalytic subunit of the peripheral V1 complex of vacuolar ATPase. V-ATPase is responsible for acidifying a variety of intracellular compartments in eukaryotic cells. The polypeptide is V-type proton ATPase subunit B 2 (Hordeum vulgare (Barley)).